The chain runs to 217 residues: ATP-dependent Clp protease proteolytic subunit (217 aa).

Ser-121 (nucleophile) is an active-site residue. The active site involves His-146.

The protein belongs to the peptidase S14 family. As to quaternary structure, fourteen ClpP subunits assemble into 2 heptameric rings which stack back to back to give a disk-like structure with a central cavity, resembling the structure of eukaryotic proteasomes.

The protein localises to the cytoplasm. The catalysed reaction is Hydrolysis of proteins to small peptides in the presence of ATP and magnesium. alpha-casein is the usual test substrate. In the absence of ATP, only oligopeptides shorter than five residues are hydrolyzed (such as succinyl-Leu-Tyr-|-NHMec, and Leu-Tyr-Leu-|-Tyr-Trp, in which cleavage of the -Tyr-|-Leu- and -Tyr-|-Trp bonds also occurs).. Functionally, cleaves peptides in various proteins in a process that requires ATP hydrolysis. Has a chymotrypsin-like activity. Plays a major role in the degradation of misfolded proteins. The sequence is that of ATP-dependent Clp protease proteolytic subunit from Burkholderia lata (strain ATCC 17760 / DSM 23089 / LMG 22485 / NCIMB 9086 / R18194 / 383).